The primary structure comprises 186 residues: Peptidyl-tRNA hydrolase (186 aa).

Tyr14 contacts tRNA. Residue His19 is the Proton acceptor of the active site. Residues Phe64, Asn66, and Asn112 each contribute to the tRNA site.

Belongs to the PTH family. Monomer.

It localises to the cytoplasm. The enzyme catalyses an N-acyl-L-alpha-aminoacyl-tRNA + H2O = an N-acyl-L-amino acid + a tRNA + H(+). In terms of biological role, hydrolyzes ribosome-free peptidyl-tRNAs (with 1 or more amino acids incorporated), which drop off the ribosome during protein synthesis, or as a result of ribosome stalling. Catalyzes the release of premature peptidyl moieties from peptidyl-tRNA molecules trapped in stalled 50S ribosomal subunits, and thus maintains levels of free tRNAs and 50S ribosomes. The chain is Peptidyl-tRNA hydrolase from Listeria monocytogenes serotype 4b (strain CLIP80459).